Consider the following 501-residue polypeptide: Probable cytosol aminopeptidase (501 aa).

Mn(2+)-binding residues include lysine 267 and aspartate 272. Lysine 279 is a catalytic residue. The Mn(2+) site is built by aspartate 290, aspartate 349, and glutamate 351. Arginine 353 is an active-site residue.

This sequence belongs to the peptidase M17 family. It depends on Mn(2+) as a cofactor.

The protein resides in the cytoplasm. It carries out the reaction Release of an N-terminal amino acid, Xaa-|-Yaa-, in which Xaa is preferably Leu, but may be other amino acids including Pro although not Arg or Lys, and Yaa may be Pro. Amino acid amides and methyl esters are also readily hydrolyzed, but rates on arylamides are exceedingly low.. It catalyses the reaction Release of an N-terminal amino acid, preferentially leucine, but not glutamic or aspartic acids.. Functionally, presumably involved in the processing and regular turnover of intracellular proteins. Catalyzes the removal of unsubstituted N-terminal amino acids from various peptides. The protein is Probable cytosol aminopeptidase of Desulfovibrio desulfuricans (strain ATCC 27774 / DSM 6949 / MB).